The chain runs to 242 residues: Flavin prenyltransferase PAD1, mitochondrial (242 aa).

The N-terminal 58 residues, 1-58 (MLLFPRRTNIAFFKTTGIFANFPLLGRTITTSPSFLTHKLSKEVTRASTSPPRPKRIV), are a transit peptide targeting the mitochondrion. Residues 63-65 (GAT), Ser-89, 140-143 (SMKS), and Arg-175 each bind FMN. Dimethylallyl phosphate-binding residues include Tyr-205 and Arg-221.

This sequence belongs to the UbiX/PAD1 family. In terms of assembly, oligomer.

Its subcellular location is the mitochondrion. The enzyme catalyses dimethylallyl phosphate + FMNH2 = prenylated FMNH2 + phosphate. Its function is as follows. Flavin prenyltransferase that catalyzes the synthesis of the prenylated FMN cofactor (prenyl-FMN) for the ferulic acid decarboxylase FDC1/ubiD. The prenyltransferase is metal-independent and links a dimethylallyl moiety from dimethylallyl monophosphate (DMAP) to the flavin N5 and C6 atoms of FMN. Involved in the decarboxylation of phenylacrylic acids like ferulic acid, p-coumaric acid or cinnamic acid, producing the corresponding vinyl derivatives which play the role of aroma metabolites. Also involved in the degradation of the food preservative sorbic acid (2,4-hexadienoic acid) to a volatile hydrocarbon, 1,3-pentadiene. Not essential for ubiquinone synthesis. Can rescue Q biosynthesis in E.coli strains lacking UbiX. Has mRNA binding activity. The polypeptide is Flavin prenyltransferase PAD1, mitochondrial (Saccharomyces cerevisiae (strain ATCC 204508 / S288c) (Baker's yeast)).